A 555-amino-acid chain; its full sequence is MSIPGFGGTNGSLASDSSEFTQISIPPANEWRIEVPFKKLLKLKVTLGTLEINGSELPNNVELQLSGVKLPIYAPPSINKEHAKVEYKLVTNPDQSVLLSSEDEEFTQYLSDETNMDLVVNLAMYIESKRQIAKDLKTNEGDHALGPRVLILGGKYLGKTSLAKTLVSYAVKMGSSPVLVNLDPKHGVFALPGSLSATVINDSLDIECANGYGFTMTTTGSLSKSMKQPVVKNFGFSDVDENVKLYTRQIDQLGIAVLSKLEGIEDGSGSEVDGNHNKVRSSGVIVDTPPFTMKSFDIISSIVSDLKIDLIVVLGNEKMKIDLTKKLKHKIEQGSLNIIKLSKSPGVVDDVNDRFIRMTQEQTIREYFNGNHRIRLSPFKTEIDLPSSSSSASASASVSSSSSTSSSGLVIYKSVLTKEYESSMAFLPSGDDFEHITNEDENGGDGNDGDGRGIVEDIKEYYQILEDPNSSNLDNSIVAITHLPLESGSSSVTNGASGSLNMSSKRKRELLNTSVMGYIHVSKVDDEKKKMKILLPFPGVFPRNVLIATSIGYNE.

ATP-binding positions include Glu30, Lys69, and 156-161; that span reads YLGKTS. The tract at residues 431 to 451 is disordered; it reads DDFEHITNEDENGGDGNDGDG.

This sequence belongs to the Clp1 family. Clp1 subfamily. Component of a pre-mRNA cleavage factor complex. Interacts directly with PCF11.

The protein localises to the nucleus. Required for endonucleolytic cleavage during polyadenylation-dependent pre-mRNA 3'-end formation. The protein is mRNA cleavage and polyadenylation factor CLP1 of Lodderomyces elongisporus (strain ATCC 11503 / CBS 2605 / JCM 1781 / NBRC 1676 / NRRL YB-4239) (Yeast).